Here is a 176-residue protein sequence, read N- to C-terminus: Nucleoside triphosphate/diphosphate phosphatase (176 aa).

Residue R23 is the Proton donor of the active site. Mg(2+) is bound by residues N87, D103, D105, D107, D120, and E123.

The protein belongs to the Ntdp family. It depends on Mg(2+) as a cofactor.

It carries out the reaction a ribonucleoside 5'-triphosphate + H2O = a ribonucleoside 5'-diphosphate + phosphate + H(+). It catalyses the reaction a ribonucleoside 5'-diphosphate + H2O = a ribonucleoside 5'-phosphate + phosphate + H(+). Has nucleoside phosphatase activity towards nucleoside triphosphates and nucleoside diphosphates. The protein is Nucleoside triphosphate/diphosphate phosphatase of Bacillus velezensis (strain DSM 23117 / BGSC 10A6 / LMG 26770 / FZB42) (Bacillus amyloliquefaciens subsp. plantarum).